The chain runs to 162 residues: Single-stranded DNA-binding protein 1 (162 aa).

In terms of domain architecture, SSB spans 5–110; it reads LNKVMLIGHL…IVCTDMQMLG (106 aa). A disordered region spans residues 110 to 162; it reads GAKDSGGGTSDASYSQNRPSYSRPSRPEPSSGNYGASPSSGGAQEFEKDDLPF. Over residues 122–140 the composition is skewed to low complexity; the sequence is SYSQNRPSYSRPSRPEPSS. Residues 141-151 are compositionally biased toward polar residues; it reads GNYGASPSSGG.

Homotetramer.

This is Single-stranded DNA-binding protein 1 (ssb1) from Chlorobaculum tepidum (strain ATCC 49652 / DSM 12025 / NBRC 103806 / TLS) (Chlorobium tepidum).